The primary structure comprises 399 residues: Transcription factor UNE10 (399 aa).

Disordered regions lie at residues 119–158 and 173–228; these read QSKP…GSQR and MGSH…RRDK. Over residues 178 to 201 the composition is skewed to basic and acidic residues; it reads NTIDDHDSVCHSRPQMEDEEEKKA. A bHLH domain is found at 213–262; that stretch reads RAAAIHNQSERKRRDKINQRMKTLQKLVPNSSKTDKASMLDEVIEYLKQL.

In terms of assembly, homodimer. Associates to PTAC12/HMR/PAP5 which acts as a transcriptional coactivator. Interacts with the Pfr form of phyB but barely with that of phyA. Binds to COP1. In terms of processing, ubiquitinated and subsequently targeted to protein degradation by COP1 in the dark, but not in far-red light. Mainly expressed in stems, leaves, seedlings, fruits and flowers, and, to a lower extent, in roots.

It is found in the nucleus. Its activity is regulated as follows. Stabilized by phyA but destabilized by phyB. Accumulates in the dark but not in far-red light upon MG132 treatment, a 26S proteasome inhibitor (at protein level). Functionally, transcription factor binding to G-box elements (5'-CACGTG-3') in target genes promoters, particularly in far-red light but barely in the dark. Required during the fertilization of ovules by pollen. Repressor of phytochrome A-mediated far-red light responses including seed germination, suppression of hypocotyl elongation, and randomization of hypocotyl growth orientation. Does not inhibit phyB-induced red light responses. The sequence is that of Transcription factor UNE10 from Arabidopsis thaliana (Mouse-ear cress).